Here is a 408-residue protein sequence, read N- to C-terminus: Cytochrome bc1 complex Rieske iron-sulfur subunit (408 aa).

3 helical membrane-spanning segments follow: residues V56–F76, M98–V118, and L166–I186. A Rieske domain is found at H293 to I390. 4 residues coordinate [2Fe-2S] cluster: C333, H335, C352, and H355. A disulfide bridge connects residues C338 and C354.

The protein belongs to the Rieske iron-sulfur protein family. In terms of assembly, the cytochrome bc1 complex is composed of a cytochrome b (QcrB), the Rieske iron-sulfur protein (QcrA) and a diheme cytochrome c (QcrC) subunit. The bc1 complex forms a supercomplex with cytochrome c oxidase (cytochrome aa3). Requires [2Fe-2S] cluster as cofactor.

It localises to the cell membrane. In terms of biological role, iron-sulfur subunit of the cytochrome bc1 complex, an essential component of the respiratory electron transport chain required for ATP synthesis. The bc1 complex catalyzes the oxidation of menaquinol and the reduction of cytochrome c in the respiratory chain. The bc1 complex operates through a Q-cycle mechanism that couples electron transfer to generation of the proton gradient that drives ATP synthesis. In Corynebacterium efficiens (strain DSM 44549 / YS-314 / AJ 12310 / JCM 11189 / NBRC 100395), this protein is Cytochrome bc1 complex Rieske iron-sulfur subunit (qcrA).